A 1406-amino-acid polypeptide reads, in one-letter code: Protein FAM135B (1406 aa).

Disordered regions lie at residues 519 to 548 (WTGQ…DGQA) and 770 to 820 (SVSA…GDSG). A phosphoserine mark is found at S777 and S778. Positions 804 to 816 (KSQGSPGSCSQLC) are enriched in polar residues.

This sequence belongs to the FAM135 family.

The polypeptide is Protein FAM135B (FAM135B) (Homo sapiens (Human)).